The sequence spans 305 residues: N-acetylglucosamine-1-phosphotransferase subunit gamma (305 aa).

An N-terminal signal peptide occupies residues 1–24; that stretch reads MAAGLARLLLLLGLSAGGPAPAGA. Residues 69–171 enclose the MRH domain; that stretch reads GKCFSLVEST…TFETPLVCHP (103 aa). The cysteines at positions 71 and 84 are disulfide-linked. N88 and N115 each carry an N-linked (GlcNAc...) asparagine glycan. Intrachain disulfides connect C129/C157 and C142/C169. Positions 176–279 constitute a DMAP1-binding domain; the sequence is VYPTLPEALQ…YTRPTETSNL (104 aa). The segment at 267–305 is disordered; the sequence is GIPYTRPTETSNLEHLGHETPRAKSPEQLRGDPGLRGSL. Basic and acidic residues predominate over residues 281–296; the sequence is HLGHETPRAKSPEQLR.

In terms of assembly, homodimer; disulfide-linked. Hexamer of two alpha (GNPTAB), two beta (GNPTAB) and two gamma (GNPTG) subunits; disulfide-linked. The alpha and/or the beta subunits of the enzyme constitute the catalytic subunits. Cys-245 mediates the formation of the interchain disulfide bond for formation of the homodimer. Cys-142, Cys-157 and Cys-169 are involved in intramolecular disulfide bonds formation. In terms of tissue distribution, widely expressed.

The protein resides in the secreted. The protein localises to the golgi apparatus. Non-catalytic subunit of the N-acetylglucosamine-1-phosphotransferase complex, an enzyme that catalyzes the formation of mannose 6-phosphate (M6P) markers on high mannose type oligosaccharides in the Golgi apparatus. Binds and presents the high mannose glycans of the acceptor to the catalytic alpha and beta subunits (GNPTAB). Enhances the rate of N-acetylglucosamine-1-phosphate transfer to the oligosaccharides of acid hydrolase acceptors. This chain is N-acetylglucosamine-1-phosphotransferase subunit gamma (GNPTG), found in Homo sapiens (Human).